A 397-amino-acid chain; its full sequence is Formate-dependent phosphoribosylglycinamide formyltransferase (397 aa).

N(1)-(5-phospho-beta-D-ribosyl)glycinamide is bound by residues 21–22 (EL) and glutamate 81. ATP-binding positions include arginine 113, lysine 154, 194–197 (EEFV), and glutamate 202. The 195-residue stretch at 118–312 (RFAAEKLKLP…EFQIHVRSAI (195 aa)) folds into the ATP-grasp domain. 2 residues coordinate Mg(2+): glutamate 271 and glutamate 283. Residues aspartate 290, lysine 361, and 368–369 (RR) contribute to the N(1)-(5-phospho-beta-D-ribosyl)glycinamide site.

This sequence belongs to the PurK/PurT family. Homodimer.

The enzyme catalyses N(1)-(5-phospho-beta-D-ribosyl)glycinamide + formate + ATP = N(2)-formyl-N(1)-(5-phospho-beta-D-ribosyl)glycinamide + ADP + phosphate + H(+). Its pathway is purine metabolism; IMP biosynthesis via de novo pathway; N(2)-formyl-N(1)-(5-phospho-D-ribosyl)glycinamide from N(1)-(5-phospho-D-ribosyl)glycinamide (formate route): step 1/1. In terms of biological role, involved in the de novo purine biosynthesis. Catalyzes the transfer of formate to 5-phospho-ribosyl-glycinamide (GAR), producing 5-phospho-ribosyl-N-formylglycinamide (FGAR). Formate is provided by PurU via hydrolysis of 10-formyl-tetrahydrofolate. The sequence is that of Formate-dependent phosphoribosylglycinamide formyltransferase from Saccharolobus solfataricus (strain ATCC 35092 / DSM 1617 / JCM 11322 / P2) (Sulfolobus solfataricus).